Consider the following 540-residue polypeptide: Methionine--tRNA ligase 1 (540 aa).

Residues 10 to 20 carry the 'HIGH' region motif; it reads PYANGSLHLGH. The Zn(2+) site is built by C141, C144, C153, and C156. The 'KMSKS' region signature appears at 327 to 331; it reads KISTS. T330 contacts ATP.

The protein belongs to the class-I aminoacyl-tRNA synthetase family. MetG type 1 subfamily. As to quaternary structure, monomer. Zn(2+) is required as a cofactor.

Its subcellular location is the cytoplasm. It carries out the reaction tRNA(Met) + L-methionine + ATP = L-methionyl-tRNA(Met) + AMP + diphosphate. Functionally, is required not only for elongation of protein synthesis but also for the initiation of all mRNA translation through initiator tRNA(fMet) aminoacylation. This is Methionine--tRNA ligase 1 from Alkaliphilus oremlandii (strain OhILAs) (Clostridium oremlandii (strain OhILAs)).